Consider the following 150-residue polypeptide: Aspartate 1-decarboxylase 2 (150 aa).

S24 acts as the Schiff-base intermediate with substrate; via pyruvic acid in catalysis. The residue at position 24 (S24) is a Pyruvic acid (Ser). T56 serves as a coordination point for substrate. The active-site Proton donor is Y57. G72–A74 provides a ligand contact to substrate.

Belongs to the PanD family. As to quaternary structure, heterooctamer of four alpha and four beta subunits. The cofactor is pyruvate. In terms of processing, is synthesized initially as an inactive proenzyme, which is activated by self-cleavage at a specific serine bond to produce a beta-subunit with a hydroxyl group at its C-terminus and an alpha-subunit with a pyruvoyl group at its N-terminus.

The protein localises to the cytoplasm. It catalyses the reaction L-aspartate + H(+) = beta-alanine + CO2. It participates in cofactor biosynthesis; (R)-pantothenate biosynthesis; beta-alanine from L-aspartate: step 1/1. Its function is as follows. Catalyzes the pyruvoyl-dependent decarboxylation of aspartate to produce beta-alanine. This chain is Aspartate 1-decarboxylase 2, found in Mesorhizobium japonicum (strain LMG 29417 / CECT 9101 / MAFF 303099) (Mesorhizobium loti (strain MAFF 303099)).